A 714-amino-acid polypeptide reads, in one-letter code: Fatty acid oxidation complex subunit alpha (714 aa).

The tract at residues 1-190 is enoyl-CoA hydratase; the sequence is MEMASAFTLN…KLGLVDDVVP (190 aa). The 3-hydroxyacyl-CoA dehydrogenase stretch occupies residues 306 to 714; the sequence is APLNSVGILG…FWKTTATDLQ (409 aa).

In the N-terminal section; belongs to the enoyl-CoA hydratase/isomerase family. The protein in the central section; belongs to the 3-hydroxyacyl-CoA dehydrogenase family. Heterotetramer of two alpha chains (FadJ) and two beta chains (FadI).

Its subcellular location is the cytoplasm. It catalyses the reaction a (3S)-3-hydroxyacyl-CoA = a (2E)-enoyl-CoA + H2O. The enzyme catalyses a 4-saturated-(3S)-3-hydroxyacyl-CoA = a (3E)-enoyl-CoA + H2O. The catalysed reaction is a (3S)-3-hydroxyacyl-CoA + NAD(+) = a 3-oxoacyl-CoA + NADH + H(+). It carries out the reaction (3S)-3-hydroxybutanoyl-CoA = (3R)-3-hydroxybutanoyl-CoA. It functions in the pathway lipid metabolism; fatty acid beta-oxidation. Functionally, catalyzes the formation of a hydroxyacyl-CoA by addition of water on enoyl-CoA. Also exhibits 3-hydroxyacyl-CoA epimerase and 3-hydroxyacyl-CoA dehydrogenase activities. The sequence is that of Fatty acid oxidation complex subunit alpha from Escherichia coli O7:K1 (strain IAI39 / ExPEC).